The following is a 116-amino-acid chain: Helper of Tim protein 13 (116 aa).

The CHY-type; degenerate zinc-finger motif lies at Thr-10–Ser-94. Residues Cys-17, His-19, Cys-40, Cys-43, Cys-68, Cys-71, Cys-89, and Cys-92 each contribute to the Zn(2+) site.

Interacts with the small Tim proteins TIM8, TIM9, TIM10, TIM12, and TIM13.

The protein localises to the mitochondrion intermembrane space. It localises to the mitochondrion membrane. Required for the assembly or recycling of the small Tim proteins in the mitochondrial intermembrane, thereby participating in the import and insertion of multi-pass transmembrane proteins into the mitochondrial inner membrane. Probably acts by facilitating the formation of disulfide bonds in small Tim proteins. The protein is Helper of Tim protein 13 (HOT13) of Saccharomyces cerevisiae (strain ATCC 204508 / S288c) (Baker's yeast).